A 325-amino-acid polypeptide reads, in one-letter code: Lipoyl synthase (325 aa).

[4Fe-4S] cluster-binding residues include Cys71, Cys76, Cys82, Cys97, Cys101, Cys104, and Ser311. A Radical SAM core domain is found at 83-300; the sequence is FSGGTATFMI…ERQALAMGFT (218 aa).

Belongs to the radical SAM superfamily. Lipoyl synthase family. It depends on [4Fe-4S] cluster as a cofactor.

It is found in the cytoplasm. It carries out the reaction [[Fe-S] cluster scaffold protein carrying a second [4Fe-4S](2+) cluster] + N(6)-octanoyl-L-lysyl-[protein] + 2 oxidized [2Fe-2S]-[ferredoxin] + 2 S-adenosyl-L-methionine + 4 H(+) = [[Fe-S] cluster scaffold protein] + N(6)-[(R)-dihydrolipoyl]-L-lysyl-[protein] + 4 Fe(3+) + 2 hydrogen sulfide + 2 5'-deoxyadenosine + 2 L-methionine + 2 reduced [2Fe-2S]-[ferredoxin]. It functions in the pathway protein modification; protein lipoylation via endogenous pathway; protein N(6)-(lipoyl)lysine from octanoyl-[acyl-carrier-protein]: step 2/2. Functionally, catalyzes the radical-mediated insertion of two sulfur atoms into the C-6 and C-8 positions of the octanoyl moiety bound to the lipoyl domains of lipoate-dependent enzymes, thereby converting the octanoylated domains into lipoylated derivatives. The chain is Lipoyl synthase from Methylobacillus flagellatus (strain ATCC 51484 / DSM 6875 / VKM B-1610 / KT).